A 253-amino-acid chain; its full sequence is 5'/3'-nucleotidase SurE (253 aa).

Positions 8, 9, 39, and 92 each coordinate a divalent metal cation.

It belongs to the SurE nucleotidase family. The cofactor is a divalent metal cation.

Its subcellular location is the cytoplasm. It carries out the reaction a ribonucleoside 5'-phosphate + H2O = a ribonucleoside + phosphate. The enzyme catalyses a ribonucleoside 3'-phosphate + H2O = a ribonucleoside + phosphate. It catalyses the reaction [phosphate](n) + H2O = [phosphate](n-1) + phosphate + H(+). Nucleotidase with a broad substrate specificity as it can dephosphorylate various ribo- and deoxyribonucleoside 5'-monophosphates and ribonucleoside 3'-monophosphates with highest affinity to 3'-AMP. Also hydrolyzes polyphosphate (exopolyphosphatase activity) with the preference for short-chain-length substrates (P20-25). Might be involved in the regulation of dNTP and NTP pools, and in the turnover of 3'-mononucleotides produced by numerous intracellular RNases (T1, T2, and F) during the degradation of various RNAs. The chain is 5'/3'-nucleotidase SurE from Citrobacter koseri (strain ATCC BAA-895 / CDC 4225-83 / SGSC4696).